A 722-amino-acid polypeptide reads, in one-letter code: Polyribonucleotide nucleotidyltransferase (722 aa).

Mg(2+) contacts are provided by aspartate 487 and aspartate 493. The KH domain occupies 554 to 613 (PRMVSFKIHPDKIREVIGKGGATIQALTKETGCSIDIKDDGTVTIASTSAEGMAEAKARI). An S1 motif domain is found at 623-691 (GKIYEGPVVK…ERGRLRLSLK (69 aa)).

Belongs to the polyribonucleotide nucleotidyltransferase family. Requires Mg(2+) as cofactor.

The protein resides in the cytoplasm. It catalyses the reaction RNA(n+1) + phosphate = RNA(n) + a ribonucleoside 5'-diphosphate. Involved in mRNA degradation. Catalyzes the phosphorolysis of single-stranded polyribonucleotides processively in the 3'- to 5'-direction. The chain is Polyribonucleotide nucleotidyltransferase from Polynucleobacter necessarius subsp. necessarius (strain STIR1).